Here is a 261-residue protein sequence, read N- to C-terminus: Undecaprenyl-diphosphatase (261 aa).

A run of 8 helical transmembrane segments spans residues Ala9–Thr31, Phe46–Tyr66, Ile80–Gly100, Ile102–Phe122, Ala137–Pro157, Ala180–Trp200, Gly209–Val229, and Gly240–Leu260.

Belongs to the UppP family.

It localises to the cell inner membrane. The catalysed reaction is di-trans,octa-cis-undecaprenyl diphosphate + H2O = di-trans,octa-cis-undecaprenyl phosphate + phosphate + H(+). Functionally, catalyzes the dephosphorylation of undecaprenyl diphosphate (UPP). Confers resistance to bacitracin. The polypeptide is Undecaprenyl-diphosphatase (Thermus thermophilus (strain ATCC 27634 / DSM 579 / HB8)).